A 160-amino-acid polypeptide reads, in one-letter code: Large ribosomal subunit protein uL18 (160 aa).

This sequence belongs to the universal ribosomal protein uL18 family. In terms of assembly, part of the 50S ribosomal subunit. Contacts the 5S and 23S rRNAs.

In terms of biological role, this is one of the proteins that bind and probably mediate the attachment of the 5S RNA into the large ribosomal subunit, where it forms part of the central protuberance. This chain is Large ribosomal subunit protein uL18, found in Thermoplasma volcanium (strain ATCC 51530 / DSM 4299 / JCM 9571 / NBRC 15438 / GSS1).